A 107-amino-acid chain; its full sequence is Probable antitoxin TacA (107 aa).

This sequence belongs to the TacA antitoxin family. Forms a complex with cognate antitoxin TacT.

Functionally, probable antitoxin component of a type II toxin-antitoxin (TA) system. Should neutralize cognate toxin TacT (y4aS). The chain is Probable antitoxin TacA from Sinorhizobium fredii (strain NBRC 101917 / NGR234).